A 247-amino-acid chain; its full sequence is Adenosylcobinamide-GDP ribazoletransferase (247 aa).

Helical transmembrane passes span 34 to 54, 59 to 79, 113 to 133, 138 to 158, and 194 to 214; these read IITF…VFMV, CGVP…TGGF, GGLA…ELAL, ILAS…LLMY, and VLLP…AIFI.

This sequence belongs to the CobS family. It depends on Mg(2+) as a cofactor.

It localises to the cell inner membrane. The enzyme catalyses alpha-ribazole + adenosylcob(III)inamide-GDP = adenosylcob(III)alamin + GMP + H(+). It catalyses the reaction alpha-ribazole 5'-phosphate + adenosylcob(III)inamide-GDP = adenosylcob(III)alamin 5'-phosphate + GMP + H(+). It functions in the pathway cofactor biosynthesis; adenosylcobalamin biosynthesis; adenosylcobalamin from cob(II)yrinate a,c-diamide: step 7/7. Functionally, joins adenosylcobinamide-GDP and alpha-ribazole to generate adenosylcobalamin (Ado-cobalamin). Also synthesizes adenosylcobalamin 5'-phosphate from adenosylcobinamide-GDP and alpha-ribazole 5'-phosphate. This is Adenosylcobinamide-GDP ribazoletransferase from Escherichia coli (strain 55989 / EAEC).